We begin with the raw amino-acid sequence, 866 residues long: MLGGIIDTITGSSKQSRLKGTVVLMRKNVLDLNDFGATVIDGLGEFLGKGVTCQLISSTAVDPNNGNRGKVGAEASLEQWLTSSLPSLTTGESRFGVTFDWDVDKLGVPGAIIVKNHHSNEFFLKTITLDDVPGRAGAVVFLANSWVYPADKYRYDRVFFANDAYLPSQMPAALKPYRDDELRNLRGDDQQGPYEEHDRVYRYDVYNDLGSPDSGNPRPILGGSPDTPYPRRGRTGRKPTTTDPDSESRLSLVEQIYVPRDERFGHLKMADFLGYSIKAIAEGIVPAIRTYVDTTPGEFDSFQDILDLYEGGLKLPDVPALEELRKRFPLQLVKDLLPAAGDYILKLPMPQIIKQDKEAWRTDEEFAREVLAGVNPMMITRLTEFPPKSSLDPSKFGDHTSMITAAHIGSNLEGLTVQQALDSNRLYILDHHDRFMPFLIDVNGLEGNFIYATRTLFFLRGDGTLAPLAIELSEPMIQGDVTAAKSTVYTPASTGVEAWVWQLAKAYVAVNDSGWHQLISHWLNTHAVMEPFVIATNRQLSVTHPVHKLLSPHYRDTMTINALARQTLINAGGIFEMTVFPGKYALWMSSMVYKNWNFTEQGLPADLIKRGVAVEDATSPYKVRLLIKDYPYAADGLEIWHAIEQWVGEYLAIYYTDDGVLRGDAELQAWWAEVREVGHGDLKGAAWWPRMDAVSELRDACTTIIWIASALHAAVNFGQYPYAGYLPNRPTVSRRRMPEPGTEAYGELGRDPERAFIRTITSQLQTIIGISLIEVLSKHSSDEVYLGQRDTPAWTSDARALEAFRRFSDRLVEIEGKVVGMNGDAGLKNRNGPAEFPYMLLYPNTSDVTGAAAGITAKGIPNSISI.

The PLAT domain maps to 33 to 161; that stretch reads NDFGATVIDG…KYRYDRVFFA (129 aa). A Lipoxygenase domain is found at 164 to 866; sequence AYLPSQMPAA…AKGIPNSISI (703 aa). The segment at 206-250 is disordered; that stretch reads YNDLGSPDSGNPRPILGGSPDTPYPRRGRTGRKPTTTDPDSESRL. Fe cation-binding residues include His-521, His-526, His-712, Asn-716, and Ile-866.

The protein belongs to the lipoxygenase family. Fe cation is required as a cofactor.

The enzyme catalyses (9Z,12Z)-octadecadienoate + O2 = (9S)-hydroperoxy-(10E,12Z)-octadecadienoate. Its pathway is lipid metabolism; oxylipin biosynthesis. In terms of biological role, plant lipoxygenase may be involved in a number of diverse aspects of plant physiology including growth and development, pest resistance, and senescence or responses to wounding. Catalyzes the hydroperoxidation of lipids containing a cis,cis-1,4-pentadiene structure. In Oryza sativa subsp. japonica (Rice), this protein is Putative linoleate 9S-lipoxygenase 3.